We begin with the raw amino-acid sequence, 193 residues long: Transcriptional activator GvpE2 (193 aa).

143-148 (KRKVYR) is a DNA binding site. A leucine-zipper region spans residues 153 to 184 (QAAIEHVDSVVLQLLTFAVGLQTIMADCIVNQ).

In terms of assembly, homodimer. Interacts with endogenous GvpD, also with GvpD from H.mediterranei.

The protein resides in the cytoplasm. Degraded once GvpD is translated; degradation requires 'Arg-494' of GvpD; tested in transgenic H.volcanii. Fusion of green fluorescent protein to its C-terminus partially protects it from degradation. Functionally, plays a regulatory role in gas vesicle synthesis, required to activate transcription of the c-gvpA operon. Gas vesicles are hollow, gas filled proteinaceous nanostructures found in several microbial planktonic microorganisms. They allow positioning of halobacteria at the optimal depth for growth in the poorly aerated, shallow brine pools of their habitat. In terms of biological role, expression of 2 c-vac DNA fragments containing 2 divergently transcribed regions (gvpE-gvpF-gvpG-gvpH-gvpI-gvpJ-gvpK-gvpL-gvpM and gvpA-gvpC-gvpN-gvpO) allows H.volcanii to produce gas vesicles. All site-directed mutagenesis is tested in H.volcanii. The chain is Transcriptional activator GvpE2 from Halobacterium salinarum (strain ATCC 700922 / JCM 11081 / NRC-1) (Halobacterium halobium).